The following is a 148-amino-acid chain: Lysozyme-like protein 6 (148 aa).

An N-terminal signal peptide occupies residues 1–19 (MLKALFICVASCLLVVNDG). The region spanning 20–148 (NIIHRCSLAK…SYWMTGCHLG (129 aa)) is the C-type lysozyme domain. 4 cysteine pairs are disulfide-bonded: cysteine 25-cysteine 145, cysteine 49-cysteine 133, cysteine 83-cysteine 98, and cysteine 94-cysteine 112. Residue glutamate 54 is part of the active site. N-linked (GlcNAc...) asparagine glycosylation is present at asparagine 58. Aspartate 71 is a catalytic residue.

The protein belongs to the glycosyl hydrolase 22 family. Monomer. Expressed strongly in testis and epididymis and weakly in seminal vesicle, vas deferens, kidney and spleen. Highly expressed in primary spermatocytes and round spermatids (at protein level).

It localises to the secreted. It is found in the cell surface. The protein resides in the cell projection. The protein localises to the cilium. Its subcellular location is the flagellum. The catalysed reaction is Hydrolysis of (1-&gt;4)-beta-linkages between N-acetylmuramic acid and N-acetyl-D-glucosamine residues in a peptidoglycan and between N-acetyl-D-glucosamine residues in chitodextrins.. Its function is as follows. May be involved sperm-egg plasma membrane adhesion and fusion during fertilization. Exhibits bacteriolytic activity in vitro against Micrococcus luteus and Staphylococcus aureus. Shows weak bacteriolytic activity against Gram-positive bacteria at physiological pH. Bacteriolytic activity is pH-dependent, with a maximum at around pH 5.6. The polypeptide is Lysozyme-like protein 6 (Lyzl6) (Mus musculus (Mouse)).